We begin with the raw amino-acid sequence, 119 residues long: Aspartate 1-decarboxylase (119 aa).

Serine 25 functions as the Schiff-base intermediate with substrate; via pyruvic acid in the catalytic mechanism. A Pyruvic acid (Ser) modification is found at serine 25. Threonine 57 is a substrate binding site. Tyrosine 58 serves as the catalytic Proton donor. 73-75 (GAA) lines the substrate pocket.

This sequence belongs to the PanD family. As to quaternary structure, heterooctamer of four alpha and four beta subunits. Pyruvate serves as cofactor. Post-translationally, is synthesized initially as an inactive proenzyme, which is activated by self-cleavage at a specific serine bond to produce a beta-subunit with a hydroxyl group at its C-terminus and an alpha-subunit with a pyruvoyl group at its N-terminus.

It is found in the cytoplasm. The enzyme catalyses L-aspartate + H(+) = beta-alanine + CO2. The protein operates within cofactor biosynthesis; (R)-pantothenate biosynthesis; beta-alanine from L-aspartate: step 1/1. Catalyzes the pyruvoyl-dependent decarboxylation of aspartate to produce beta-alanine. The chain is Aspartate 1-decarboxylase from Thermosipho melanesiensis (strain DSM 12029 / CIP 104789 / BI429).